A 267-amino-acid chain; its full sequence is Type II pantothenate kinase (267 aa).

Position 6 to 13 (6 to 13 (DAGGTLIK)) interacts with ATP. Glutamate 70 serves as the catalytic Proton acceptor. ATP-binding positions include threonine 99, 121 to 125 (GGMIQ), tyrosine 137, and serine 225.

It belongs to the type II pantothenate kinase family. Homodimer.

It is found in the cytoplasm. The enzyme catalyses (R)-pantothenate + ATP = (R)-4'-phosphopantothenate + ADP + H(+). The protein operates within cofactor biosynthesis; coenzyme A biosynthesis; CoA from (R)-pantothenate: step 1/5. Its function is as follows. Catalyzes the phosphorylation of pantothenate (Pan), the first step in CoA biosynthesis. This is Type II pantothenate kinase from Staphylococcus aureus (strain Mu50 / ATCC 700699).